Reading from the N-terminus, the 551-residue chain is High-affinity glucose transporter (551 aa).

At 1–27 the chain is on the cytoplasmic side; it reads MSLKNWLLLRDIQYEGTFYKKFPHVYN. A helical transmembrane segment spans residues 28-48; the sequence is IYVIGFIACISGLMFGFDIAS. At 49–70 the chain is on the extracellular side; sequence MSSMIGTDVYKDYFSNPDSLTY. A helical membrane pass occupies residues 71 to 91; sequence GGITASMAGGSFLGSLISPNF. At 92 to 98 the chain is on the cytoplasmic side; that stretch reads SDAFGRK. The chain crosses the membrane as a helical span at residues 99–119; sequence VSLHICAALWIIGAILQCAAQ. The Extracellular segment spans residues 120 to 123; sequence DQAM. The chain crosses the membrane as a helical span at residues 124–144; sequence LIVGRVISGMGIGFGSSAAPV. At 145–155 the chain is on the cytoplasmic side; that stretch reads YCSEISPPKIR. The helical transmembrane segment at 156 to 176 threads the bilayer; sequence GTISGLFQFSVTVGIMVLFYI. At 177 to 190 the chain is on the extracellular side; it reads GYGCHFIDGAAAFR. The helical transmembrane segment at 191–211 threads the bilayer; the sequence is ITWGLQMVPGLILMVGVFFIP. Residues 212 to 289 are Cytoplasmic-facing; that stretch reads ESPRWLANHD…VGVSAQMWQQ (78 aa). The helical transmembrane segment at 290-310 threads the bilayer; sequence LCGMNVMMYYIVYIFNMAGYT. Over 311–315 the chain is Extracellular; sequence GNTNL. Residues 316 to 336 traverse the membrane as a helical segment; it reads VASSIQYVLNVVMTIPALFLI. At 337 to 343 the chain is on the cytoplasmic side; it reads DKFGRRP. Residues 344 to 364 form a helical membrane-spanning segment; the sequence is VLIIGGIFMFTWLFSVAGILA. Over 365 to 395 the chain is Extracellular; it reads TYSVPAPGGVNGDDTVTIQIPSENTSAANGV. Asn-388 carries N-linked (GlcNAc...) asparagine glycosylation. A helical membrane pass occupies residues 396–416; that stretch reads IASSYLFVCFFAPTWGIGIWI. Residues 417-432 lie on the Cytoplasmic side of the membrane; that stretch reads YCSEIFNNMERAKGSA. A helical membrane pass occupies residues 433–453; sequence LSAATNWAFNFALAMFVPSAF. Residues 454-459 lie on the Extracellular side of the membrane; the sequence is KNISWK. The helical transmembrane segment at 460–480 threads the bilayer; the sequence is TYIIFGVFSVALTIQTFFMFP. Residues 481-551 lie on the Cytoplasmic side of the membrane; sequence ETKGKTLEEI…DRSDSASNSN (71 aa).

This sequence belongs to the major facilitator superfamily. Sugar transporter (TC 2.A.1.1) family.

Its subcellular location is the membrane. Its function is as follows. High-affinity glucose transporter. In Kluyveromyces lactis (strain ATCC 8585 / CBS 2359 / DSM 70799 / NBRC 1267 / NRRL Y-1140 / WM37) (Yeast), this protein is High-affinity glucose transporter (HGT1).